The sequence spans 54 residues: uncharacterized protein (54 aa).

Residues 1–28 (MDRKKDEIQRKYREQMREKKEREKEDGS) are compositionally biased toward basic and acidic residues. Residues 1–29 (MDRKKDEIQRKYREQMREKKEREKEDGSS) form a disordered region. The chain crosses the membrane as a helical span at residues 31–51 (TFEIVVVLAIIILMFFFNSVF).

The protein resides in the cell membrane. This is an uncharacterized protein from Bacillus subtilis (strain 168).